The primary structure comprises 448 residues: tRNA-2-methylthio-N(6)-dimethylallyladenosine synthase (448 aa).

The MTTase N-terminal domain occupies 2-119 (KKLYIKTFGC…LSDLIAKRRE (118 aa)). [4Fe-4S] cluster-binding residues include C11, C48, C82, C156, C160, and C163. Residues 142-377 (RQTRGSAYVS…LVESQANQIS (236 aa)) enclose the Radical SAM core domain. Residues 378–444 (QKMLGNIERV…NYTLRGKLVE (67 aa)) form the TRAM domain.

The protein belongs to the methylthiotransferase family. MiaB subfamily. Monomer. [4Fe-4S] cluster serves as cofactor.

It is found in the cytoplasm. The enzyme catalyses N(6)-dimethylallyladenosine(37) in tRNA + (sulfur carrier)-SH + AH2 + 2 S-adenosyl-L-methionine = 2-methylsulfanyl-N(6)-dimethylallyladenosine(37) in tRNA + (sulfur carrier)-H + 5'-deoxyadenosine + L-methionine + A + S-adenosyl-L-homocysteine + 2 H(+). In terms of biological role, catalyzes the methylthiolation of N6-(dimethylallyl)adenosine (i(6)A), leading to the formation of 2-methylthio-N6-(dimethylallyl)adenosine (ms(2)i(6)A) at position 37 in tRNAs that read codons beginning with uridine. The protein is tRNA-2-methylthio-N(6)-dimethylallyladenosine synthase of Polynucleobacter necessarius subsp. necessarius (strain STIR1).